A 377-amino-acid chain; its full sequence is Protein MULTIPOLAR SPINDLE 1 (377 aa).

Residues Leu117–Leu124 carry the Nuclear localization signal motif.

Expressed in roots, stems, leaves, inflorescences and seedlings. Strongly expressed in meiocytes.

It localises to the nucleus. Its subcellular location is the cytoplasm. It is found in the cytoskeleton. The protein localises to the spindle. In terms of biological role, involved in meiotic spindle organization in meiocytes thus regulating chromosome segregation. Required for formation of meiotic DNA double-strand breaks (DSBs) during early recombination processes. In Arabidopsis thaliana (Mouse-ear cress), this protein is Protein MULTIPOLAR SPINDLE 1.